A 544-amino-acid chain; its full sequence is Chaperonin GroEL 1 (544 aa).

ATP contacts are provided by residues 30–33, Lys-51, 87–91, Gly-415, 479–481, and Asp-495; these read TLGP, DGTTT, and NAA.

It belongs to the chaperonin (HSP60) family. In terms of assembly, forms a cylinder of 14 subunits composed of two heptameric rings stacked back-to-back. Interacts with the co-chaperonin GroES.

The protein resides in the cytoplasm. The catalysed reaction is ATP + H2O + a folded polypeptide = ADP + phosphate + an unfolded polypeptide.. Its function is as follows. Together with its co-chaperonin GroES, plays an essential role in assisting protein folding. The GroEL-GroES system forms a nano-cage that allows encapsulation of the non-native substrate proteins and provides a physical environment optimized to promote and accelerate protein folding. The sequence is that of Chaperonin GroEL 1 from Vibrio cholerae serotype O1 (strain ATCC 39315 / El Tor Inaba N16961).